The primary structure comprises 154 residues: Large ribosomal subunit protein uL30 (154 aa).

The segment at 122 to 141 (RGGHDGIKTPASDGGQLGKH) is disordered.

Belongs to the universal ribosomal protein uL30 family. In terms of assembly, part of the 50S ribosomal subunit.

The polypeptide is Large ribosomal subunit protein uL30 (Halobacterium salinarum (strain ATCC 29341 / DSM 671 / R1)).